The chain runs to 269 residues: Hemin import ATP-binding protein HmuV (269 aa).

An ABC transporter domain is found at 5-242; it reads LDAEAASFAI…SLIRRVFDIA (238 aa). Position 37–44 (37–44) interacts with ATP; it reads GPNGAGKS.

This sequence belongs to the ABC transporter superfamily. Heme (hemin) importer (TC 3.A.1.14.5) family. The complex is composed of two ATP-binding proteins (HmuV), two transmembrane proteins (HmuU) and a solute-binding protein (HmuT).

The protein resides in the cell inner membrane. Its function is as follows. Part of the ABC transporter complex HmuTUV involved in hemin import. Responsible for energy coupling to the transport system. This chain is Hemin import ATP-binding protein HmuV, found in Rhodopseudomonas palustris (strain BisB18).